The sequence spans 432 residues: Adenylosuccinate synthetase (432 aa).

Residues 13–19 (GDEGKGK) and 41–43 (GHT) contribute to the GTP site. The active-site Proton acceptor is aspartate 14. Residues aspartate 14 and glycine 41 each coordinate Mg(2+). IMP contacts are provided by residues 14–17 (DEGK), 39–42 (NAGH), threonine 130, arginine 144, glutamine 225, threonine 240, and arginine 304. Histidine 42 (proton donor) is an active-site residue. Residue 300–306 (STTGRPR) participates in substrate binding. Residues arginine 306, 332-334 (KLD), and 416-418 (STG) contribute to the GTP site.

This sequence belongs to the adenylosuccinate synthetase family. As to quaternary structure, homodimer. Mg(2+) serves as cofactor.

It is found in the cytoplasm. The catalysed reaction is IMP + L-aspartate + GTP = N(6)-(1,2-dicarboxyethyl)-AMP + GDP + phosphate + 2 H(+). It participates in purine metabolism; AMP biosynthesis via de novo pathway; AMP from IMP: step 1/2. Plays an important role in the de novo pathway of purine nucleotide biosynthesis. Catalyzes the first committed step in the biosynthesis of AMP from IMP. In Nitrosomonas eutropha (strain DSM 101675 / C91 / Nm57), this protein is Adenylosuccinate synthetase.